A 711-amino-acid polypeptide reads, in one-letter code: Ribosomal RNA large subunit methyltransferase K/L (711 aa).

The THUMP domain occupies 43–154 (TLYRTLLWSR…RENLVISLDL (112 aa)).

The protein belongs to the methyltransferase superfamily. RlmKL family.

It localises to the cytoplasm. The enzyme catalyses guanosine(2445) in 23S rRNA + S-adenosyl-L-methionine = N(2)-methylguanosine(2445) in 23S rRNA + S-adenosyl-L-homocysteine + H(+). It catalyses the reaction guanosine(2069) in 23S rRNA + S-adenosyl-L-methionine = N(2)-methylguanosine(2069) in 23S rRNA + S-adenosyl-L-homocysteine + H(+). In terms of biological role, specifically methylates the guanine in position 2445 (m2G2445) and the guanine in position 2069 (m7G2069) of 23S rRNA. This Haemophilus influenzae (strain ATCC 51907 / DSM 11121 / KW20 / Rd) protein is Ribosomal RNA large subunit methyltransferase K/L.